The following is a 266-amino-acid chain: 2-dehydro-3-deoxy-D-gluconate/2-dehydro-3-deoxy-phosphogluconate aldolase (266 aa).

Residues 36–37 (ST), 123–125 (YNI), and 151–153 (KDS) contribute to the substrate site. The active-site Schiff-base intermediate with substrate is K151.

The protein belongs to the DapA family. KDPG aldolase subfamily. As to quaternary structure, homotetramer; dimer of dimers.

The catalysed reaction is 2-dehydro-3-deoxy-6-phospho-D-gluconate = D-glyceraldehyde 3-phosphate + pyruvate. It carries out the reaction 2-dehydro-3-deoxy-D-gluconate = D-glyceraldehyde + pyruvate. The enzyme catalyses 2-dehydro-3-deoxy-6-phospho-D-galactonate = D-glyceraldehyde 3-phosphate + pyruvate. It catalyses the reaction 2-dehydro-3-deoxy-D-galactonate = D-glyceraldehyde + pyruvate. It functions in the pathway carbohydrate acid metabolism; 2-dehydro-3-deoxy-D-gluconate degradation; D-glyceraldehyde 3-phosphate and pyruvate from 2-dehydro-3-deoxy-D-gluconate: step 2/2. In terms of biological role, involved in the degradation of glucose via the Entner-Doudoroff pathway. Catalyzes the reversible cleavage of 2-keto-3-deoxy-6-phosphogluconate (KDPG) and 2-keto-3-deoxygluconate (KDG) forming pyruvate and glyceraldehyde 3-phosphate or glyceraldehyde, respectively. It is also able to catalyze the reversible cleavage of 2-keto-3-deoxy-6-phosphogalactonate (KDPGal) and 2-keto-3-deoxygalactonate (KDGal). It is equally active with both D- and L-glyceraldehyde. In Picrophilus torridus (strain ATCC 700027 / DSM 9790 / JCM 10055 / NBRC 100828 / KAW 2/3), this protein is 2-dehydro-3-deoxy-D-gluconate/2-dehydro-3-deoxy-phosphogluconate aldolase.